The primary structure comprises 152 residues: Small ribosomal subunit protein uS13 (152 aa).

An N-acetylserine modification is found at serine 2. Lysine 91 is covalently cross-linked (Glycyl lysine isopeptide (Lys-Gly) (interchain with G-Cter in SUMO2)). N6-acetyllysine; alternate occurs at positions 94 and 106. Glycyl lysine isopeptide (Lys-Gly) (interchain with G-Cter in SUMO2); alternate cross-links involve residues lysine 94 and lysine 106.

The protein belongs to the universal ribosomal protein uS13 family. Component of the small ribosomal subunit.

The protein localises to the cytoplasm. Component of the small ribosomal subunit. The ribosome is a large ribonucleoprotein complex responsible for the synthesis of proteins in the cell. In Homo sapiens (Human), this protein is Small ribosomal subunit protein uS13 (RPS18).